The sequence spans 128 residues: Small ribosomal subunit protein eS8 (128 aa).

Belongs to the eukaryotic ribosomal protein eS8 family. Part of the 30S ribosomal subunit.

The sequence is that of Small ribosomal subunit protein eS8 from Methanococcus maripaludis (strain DSM 14266 / JCM 13030 / NBRC 101832 / S2 / LL).